We begin with the raw amino-acid sequence, 119 residues long: Circadian clock oscillator protein KaiB (119 aa).

This sequence belongs to the KaiB family. May undergo a major conformational rearrangment; in the free state forms homooligomers. When bound to KaiC switches to a monomeric thioredoxin-fold (KaiB(fs)). The active oscillator complex is probably KaiC(6):KaiB(6).

Its function is as follows. Component of the KaiBC clock protein complex, which constitutes the main circadian regulator in cyanobacteria; it may modify the ATPase activity of KaiC. May be a metamorphic protein which reversibly switches between an inactive tetrameric fold and a rare, thioredoxin-like monomeric fold (KaiB(fs)). KaiB(fs) binds phospho-KaiC, and perhaps clock output effectors. The sequence is that of Circadian clock oscillator protein KaiB from Prochlorococcus marinus (strain MIT 9313).